Reading from the N-terminus, the 224-residue chain is Cytochrome c biogenesis ATP-binding export protein CcmA (224 aa).

The ABC transporter domain maps to 1 to 220 (MQNAEAAPAL…EYAHAEVVGA (220 aa)). Residue 40-47 (GANGSGKT) coordinates ATP.

The protein belongs to the ABC transporter superfamily. CcmA exporter (TC 3.A.1.107) family. As to quaternary structure, the complex is composed of two ATP-binding proteins (CcmA) and two transmembrane proteins (CcmB).

Its subcellular location is the cell inner membrane. It carries out the reaction heme b(in) + ATP + H2O = heme b(out) + ADP + phosphate + H(+). In terms of biological role, part of the ABC transporter complex CcmAB involved in the biogenesis of c-type cytochromes; once thought to export heme, this seems not to be the case, but its exact role is uncertain. Responsible for energy coupling to the transport system. In Bordetella bronchiseptica (strain ATCC BAA-588 / NCTC 13252 / RB50) (Alcaligenes bronchisepticus), this protein is Cytochrome c biogenesis ATP-binding export protein CcmA.